Consider the following 184-residue polypeptide: Tumor necrosis factor alpha-induced protein 8-like protein 2 (184 aa).

Ser3 carries the phosphoserine modification.

Belongs to the TNFAIP8 family. TNFAIP8L2 subfamily. In terms of assembly, may interact with CASP8; however, such result is unclear since could not reproduce the interaction with CASP8. Interacts with RAC1. Post-translationally, phosphorylated by TAK1/MAP3K7; this phosphorylation triggers association with BTRC and subsequent ubiquitination and degradation. Ubiquitinated in a BTRC-depdent manner; leading to degradation mediated through the proteasome pathway.

The protein resides in the cytoplasm. Its subcellular location is the nucleus. It localises to the lysosome. Functionally, acts as a negative regulator of innate and adaptive immunity by maintaining immune homeostasis. Plays a regulatory role in the Toll-like signaling pathway by determining the strength of LPS-induced signaling and gene expression. Inhibits TCR-mediated T-cell activation and negatively regulate T-cell function to prevent hyperresponsiveness. Also inhibits autolysosome formation via negatively modulating MTOR activation by interacting with RAC1 and promoting the disassociation of the RAC1-MTOR complex. Plays an essential role in NK-cell biology by acting as a checkpoint and displaying an expression pattern correlating with NK-cell maturation process and by negatively regulating NK-cell maturation and antitumor immunity. Mechanistically, suppresses IL-15-triggered mTOR activity in NK-cells. This is Tumor necrosis factor alpha-induced protein 8-like protein 2 (TNFAIP8L2) from Otolemur garnettii (Small-eared galago).